Here is a 156-residue protein sequence, read N- to C-terminus: Small ribosomal subunit protein uS7 (156 aa).

This sequence belongs to the universal ribosomal protein uS7 family. In terms of assembly, part of the 30S ribosomal subunit. Contacts proteins S9 and S11.

One of the primary rRNA binding proteins, it binds directly to 16S rRNA where it nucleates assembly of the head domain of the 30S subunit. Is located at the subunit interface close to the decoding center, probably blocks exit of the E-site tRNA. The polypeptide is Small ribosomal subunit protein uS7 (Trichlorobacter lovleyi (strain ATCC BAA-1151 / DSM 17278 / SZ) (Geobacter lovleyi)).